Consider the following 484-residue polypeptide: Probable D-lactate dehydrogenase, mitochondrial (484 aa).

The N-terminal 52 residues, 1–52 (MAMLLRVATQRLSPWRSFCSRGSQGGLSQDFVEALKAVVGSPHVSTASAVRE), are a transit peptide targeting the mitochondrion. Lys-36 bears the N6-acetyllysine mark. The region spanning 62–242 (RCQPPDAVVW…TSTTLRLHPA (181 aa)) is the FAD-binding PCMH-type domain. Lys-292 is subject to N6-acetyllysine. Lys-335 carries the N6-acetyllysine; alternate modification. Residue Lys-335 is modified to N6-succinyllysine; alternate. Residues Lys-422 and Lys-449 each carry the N6-acetyllysine modification.

The protein belongs to the FAD-binding oxidoreductase/transferase type 4 family. In terms of assembly, interacts with CSRP3. FAD is required as a cofactor. In terms of tissue distribution, readily detected in liver and kidney, with a weaker signal observed in heart, skeletal muscle, stomach, brain, and lung.

It localises to the mitochondrion. It catalyses the reaction (R)-lactate + 2 Fe(III)-[cytochrome c] = 2 Fe(II)-[cytochrome c] + pyruvate + 2 H(+). In terms of biological role, involved in D-lactate, but not L-lactate catabolic process. The polypeptide is Probable D-lactate dehydrogenase, mitochondrial (Mus musculus (Mouse)).